The primary structure comprises 343 residues: DNA-directed RNA polymerase subunit alpha (343 aa).

The alpha N-terminal domain (alpha-NTD) stretch occupies residues 1–239 (MGETVTIQKN…DQLNVFVNFE (239 aa)). Residues 255–343 (FNPAFLKKVD…ELAKRFEDHY (89 aa)) form an alpha C-terminal domain (alpha-CTD) region.

This sequence belongs to the RNA polymerase alpha chain family. In terms of assembly, homodimer. The RNAP catalytic core consists of 2 alpha, 1 beta, 1 beta' and 1 omega subunit. When a sigma factor is associated with the core the holoenzyme is formed, which can initiate transcription.

It carries out the reaction RNA(n) + a ribonucleoside 5'-triphosphate = RNA(n+1) + diphosphate. DNA-dependent RNA polymerase catalyzes the transcription of DNA into RNA using the four ribonucleoside triphosphates as substrates. The protein is DNA-directed RNA polymerase subunit alpha of Bradyrhizobium diazoefficiens (strain JCM 10833 / BCRC 13528 / IAM 13628 / NBRC 14792 / USDA 110).